The sequence spans 472 residues: Carbohydrate sulfotransferase 3 (472 aa).

Residues Met-1–Lys-19 lie on the Cytoplasmic side of the membrane. The chain crosses the membrane as a helical; Signal-anchor for type II membrane protein span at residues Ile-20–Ile-38. The Lumenal portion of the chain corresponds to Glu-39–Thr-472. Residues Asn-63, Asn-74, and Asn-96 are each glycosylated (N-linked (GlcNAc...) asparagine). Residue Thr-135–Phe-141 participates in 3'-phosphoadenylyl sulfate binding. Asn-250 is a glycosylation site (N-linked (GlcNAc...) asparagine). Arg-295–Ser-303 is a 3'-phosphoadenylyl sulfate binding site. Residues Asn-413 and Asn-457 are each glycosylated (N-linked (GlcNAc...) asparagine).

The protein belongs to the sulfotransferase 1 family. Gal/GlcNAc/GalNAc subfamily. In terms of processing, N-glycosylated. In terms of tissue distribution, widely expressed. Highly expressed in spleen, lung, eye and stomach. Constitutively expressed at low level during the mid- to late-gestation period. Expressed in the brain in a temporally controlled manner: peaks at 2 weeks after birth in the cerebellum, but at 3 weeks in the cerebrum. Localizes to stromal cells in the bone marrow, and stromal cells in the marginal zone and red pulp of the spleen, but the sense probe did not.

The protein localises to the golgi apparatus membrane. It catalyses the reaction chondroitin beta-D-glucuronate + n 3'-phosphoadenylyl sulfate = chondroitin 6'-sulfate + n adenosine 3',5'-bisphosphate + n H(+). The catalysed reaction is 3'-phosphoadenylyl sulfate + keratan = adenosine 3',5'-bisphosphate + keratan 6'-sulfate.. Its function is as follows. Sulfotransferase that utilizes 3'-phospho-5'-adenylyl sulfate (PAPS) as sulfonate donor to catalyze the transfer of sulfate to position 6 of the N-acetylgalactosamine (GalNAc) residue of chondroitin. Chondroitin sulfate constitutes the predominant proteoglycan present in cartilage and is distributed on the surfaces of many cells and extracellular matrices. Catalyzes with a lower efficiency the sulfation of Gal residues of keratan sulfate, another glycosaminoglycan. Can also catalyze the sulfation of the Gal residues in sialyl N-acetyllactosamine (sialyl LacNAc) oligosaccharides. May play a role in the maintenance of naive T-lymphocytes in the spleen. In Mus musculus (Mouse), this protein is Carbohydrate sulfotransferase 3 (Chst3).